Consider the following 245-residue polypeptide: Sugar fermentation stimulation protein homolog (245 aa).

This sequence belongs to the SfsA family.

This chain is Sugar fermentation stimulation protein homolog, found in Rhodospirillum rubrum (strain ATCC 11170 / ATH 1.1.1 / DSM 467 / LMG 4362 / NCIMB 8255 / S1).